The sequence spans 627 residues: MSATQKNNITRLEQLDRQSTQPFPNSRKVYLTGSRPDIRVPVREISLADTPTAFGGEKNPPVFVYDTSGPYTDPEVRIDLRKGLPDVRSRWIDERGDTEILPGLTSEFGQARLADASLDALRFAHVRTPRRAKPGANVSQMHYAKKGIITPEMEYIAIRENMKLQEARAAGLLDQQHPGHSFGANIPKEITPEFVREEVARGRAIIPANINHTELEPMIIGRNFLVKINGNIGNSALGSSIEEEVEKLTWGIRWGADTVMDLSTGKHIHETREWILRNSPVPIGTVPIYQALEKVNGVAEDLTWEIFRDTLIEQAEQGVDYFTIHAGVLLRYVPLTAKRVTGIVSRGGSIMAKWCLAHHQENFLYTHFEEICEIMKAYDVSFSLGDGLRPGSVADANDAAQFGELETLGELTKIAWKHDVQVMIEGPGHVPMQLIKENMDKQLECCDEAPFYTLGPLTTDIAPGYDHITSGIGAAMIGWFGCAMLCYVTPKEHLGLPNKDDVKTGIITYKIAAHAADLAKGHPGAQIRDNALSKARFEFRWEDQFNLGLDPDTARAFHDETLPKDSAKVAHFCSMCGPKFCSMKITQEVRDYAKENGLSDESKAIEAGFQEQAARFKDEGSVIYRQV.

Over residues 1 to 24 (MSATQKNNITRLEQLDRQSTQPFP) the composition is skewed to polar residues. The tract at residues 1-29 (MSATQKNNITRLEQLDRQSTQPFPNSRKV) is disordered. Substrate-binding positions include Asn-231, Met-260, Tyr-289, His-325, 345–347 (SRG), 386–389 (DGLR), and Glu-425. His-429 is a binding site for Zn(2+). Residue Tyr-452 participates in substrate binding. His-493 provides a ligand contact to Zn(2+). [4Fe-4S] cluster-binding residues include Cys-573, Cys-576, and Cys-581.

This sequence belongs to the ThiC family. As to quaternary structure, homodimer. It depends on [4Fe-4S] cluster as a cofactor.

The catalysed reaction is 5-amino-1-(5-phospho-beta-D-ribosyl)imidazole + S-adenosyl-L-methionine = 4-amino-2-methyl-5-(phosphooxymethyl)pyrimidine + CO + 5'-deoxyadenosine + formate + L-methionine + 3 H(+). It participates in cofactor biosynthesis; thiamine diphosphate biosynthesis. Catalyzes the synthesis of the hydroxymethylpyrimidine phosphate (HMP-P) moiety of thiamine from aminoimidazole ribotide (AIR) in a radical S-adenosyl-L-methionine (SAM)-dependent reaction. In Pseudomonas aeruginosa (strain LESB58), this protein is Phosphomethylpyrimidine synthase.